Here is a 476-residue protein sequence, read N- to C-terminus: Adenosylhomocysteinase (476 aa).

Substrate contacts are provided by Thr62, Asp141, and Glu201. NAD(+) is bound at residue 202-204; that stretch reads TTT. Residues Lys231 and Asp235 each coordinate substrate. Residues Asn236, 265–270, Glu288, Asn323, 344–346, and Asn389 contribute to the NAD(+) site; these read GYGDVG and IGH.

The protein belongs to the adenosylhomocysteinase family. Requires NAD(+) as cofactor.

It localises to the cytoplasm. It carries out the reaction S-adenosyl-L-homocysteine + H2O = L-homocysteine + adenosine. Its pathway is amino-acid biosynthesis; L-homocysteine biosynthesis; L-homocysteine from S-adenosyl-L-homocysteine: step 1/1. In terms of biological role, may play a key role in the regulation of the intracellular concentration of adenosylhomocysteine. The polypeptide is Adenosylhomocysteinase (Myxococcus xanthus (strain DK1622)).